Consider the following 168-residue polypeptide: 6-pyruvoyl tetrahydrobiopterin synthase (168 aa).

A Zn(2+)-binding site is contributed by H19. Residue C38 is the Proton acceptor of the active site. Zn(2+)-binding residues include H44 and H46. Active-site charge relay system residues include H85 and E130. S159 is modified (phosphoserine). Position 161 is a phosphothreonine (T161). 3 positions are modified to phosphoserine: S164, S165, and S167.

The protein belongs to the PTPS family. In terms of assembly, homohexamer formed of two homotrimers in a head to head fashion. The cofactor is Zn(2+).

It carries out the reaction 7,8-dihydroneopterin 3'-triphosphate = 6-pyruvoyl-5,6,7,8-tetrahydropterin + triphosphate + H(+). It functions in the pathway cofactor biosynthesis; tetrahydrobiopterin biosynthesis; tetrahydrobiopterin from 7,8-dihydroneopterin triphosphate: step 1/3. In terms of biological role, required for pigment and biopterin synthesis. The polypeptide is 6-pyruvoyl tetrahydrobiopterin synthase (pr) (Drosophila melanogaster (Fruit fly)).